The following is a 216-amino-acid chain: Probable GTP-binding protein EngB (216 aa).

An EngB-type G domain is found at Q24–D205. Residues G32 to S39, G59 to A63, D86 to G89, T153 to D156, and F184 to A186 contribute to the GTP site. S39 and T61 together coordinate Mg(2+).

It belongs to the TRAFAC class TrmE-Era-EngA-EngB-Septin-like GTPase superfamily. EngB GTPase family. Mg(2+) serves as cofactor.

Necessary for normal cell division and for the maintenance of normal septation. This chain is Probable GTP-binding protein EngB, found in Anaeromyxobacter sp. (strain Fw109-5).